We begin with the raw amino-acid sequence, 185 residues long: Elongation factor P (185 aa).

This sequence belongs to the elongation factor P family.

The protein resides in the cytoplasm. It functions in the pathway protein biosynthesis; polypeptide chain elongation. Functionally, involved in peptide bond synthesis. Stimulates efficient translation and peptide-bond synthesis on native or reconstituted 70S ribosomes in vitro. Probably functions indirectly by altering the affinity of the ribosome for aminoacyl-tRNA, thus increasing their reactivity as acceptors for peptidyl transferase. This Lachnoclostridium phytofermentans (strain ATCC 700394 / DSM 18823 / ISDg) (Clostridium phytofermentans) protein is Elongation factor P.